The sequence spans 317 residues: Probable deoxyhypusine synthase 1 (317 aa).

The active-site Nucleophile is the lysine 285.

The protein belongs to the deoxyhypusine synthase family. It depends on NAD(+) as a cofactor.

The catalysed reaction is [eIF5A protein]-L-lysine + spermidine = [eIF5A protein]-deoxyhypusine + propane-1,3-diamine. The protein operates within protein modification; eIF5A hypusination. Functionally, catalyzes the NAD-dependent oxidative cleavage of spermidine and the subsequent transfer of the butylamine moiety of spermidine to the epsilon-amino group of a specific lysine residue of the eIF-5A precursor protein to form the intermediate deoxyhypusine residue. This chain is Probable deoxyhypusine synthase 1 (dys1), found in Methanosarcina mazei (strain ATCC BAA-159 / DSM 3647 / Goe1 / Go1 / JCM 11833 / OCM 88) (Methanosarcina frisia).